The chain runs to 807 residues: Glycerol-3-phosphate acyltransferase (807 aa).

The HXXXXD motif motif lies at 305-310 (CHRSHM).

Belongs to the GPAT/DAPAT family.

It is found in the cell inner membrane. It catalyses the reaction sn-glycerol 3-phosphate + an acyl-CoA = a 1-acyl-sn-glycero-3-phosphate + CoA. It functions in the pathway phospholipid metabolism; CDP-diacylglycerol biosynthesis; CDP-diacylglycerol from sn-glycerol 3-phosphate: step 1/3. This chain is Glycerol-3-phosphate acyltransferase, found in Klebsiella pneumoniae (strain 342).